A 124-amino-acid chain; its full sequence is Large ribosomal subunit protein eL22z (124 aa).

The protein belongs to the eukaryotic ribosomal protein eL22 family.

The polypeptide is Large ribosomal subunit protein eL22z (RPL22B) (Arabidopsis thaliana (Mouse-ear cress)).